The primary structure comprises 211 residues: Imidazole glycerol phosphate synthase subunit HisH (211 aa).

The Glutamine amidotransferase type-1 domain maps to 3–211 (VVAVIDYEMG…VSQVREKIAA (209 aa)). C81 (nucleophile) is an active-site residue. Catalysis depends on residues H186 and E188.

As to quaternary structure, heterodimer of HisH and HisF.

The protein localises to the cytoplasm. It carries out the reaction 5-[(5-phospho-1-deoxy-D-ribulos-1-ylimino)methylamino]-1-(5-phospho-beta-D-ribosyl)imidazole-4-carboxamide + L-glutamine = D-erythro-1-(imidazol-4-yl)glycerol 3-phosphate + 5-amino-1-(5-phospho-beta-D-ribosyl)imidazole-4-carboxamide + L-glutamate + H(+). The catalysed reaction is L-glutamine + H2O = L-glutamate + NH4(+). It functions in the pathway amino-acid biosynthesis; L-histidine biosynthesis; L-histidine from 5-phospho-alpha-D-ribose 1-diphosphate: step 5/9. Functionally, IGPS catalyzes the conversion of PRFAR and glutamine to IGP, AICAR and glutamate. The HisH subunit catalyzes the hydrolysis of glutamine to glutamate and ammonia as part of the synthesis of IGP and AICAR. The resulting ammonia molecule is channeled to the active site of HisF. The polypeptide is Imidazole glycerol phosphate synthase subunit HisH (Trichormus variabilis (strain ATCC 29413 / PCC 7937) (Anabaena variabilis)).